A 2497-amino-acid polypeptide reads, in one-letter code: Integrator complex subunit 1 homolog (2497 aa).

Residues 1–10 (MMLNKIKRSK) are compositionally biased toward basic residues. Disordered regions lie at residues 1 to 151 (MMLN…NNNI), 300 to 337 (QPQP…IKKS), 946 to 965 (QQQQ…QQPT), 1028 to 1108 (TTTT…TSSS), 1234 to 1292 (INNN…NQKS), and 1572 to 1604 (NNNN…NNIT). Composition is skewed to low complexity over residues 37–46 (SDNNNNNSND), 60–151 (NNSI…NNNI), 305–333 (QQQQ…QPQQ), 946–963 (QQQQ…QQQQ), and 1028–1058 (TTTT…SSSL). The segment covering 1075 to 1091 (SGLSGSSNGINQSSDSI) has biased composition (polar residues). Low complexity-rich tracts occupy residues 1097 to 1108 (STSPTTTTTSSS), 1234 to 1265 (INNN…NINK), 1272 to 1289 (HSNS…NKNN), and 1572 to 1602 (NNNN…NNNN). Residues 1645–1675 (RILKNTTQQKQQKQQQKESVQKSIQSLSKLI) are a coiled coil. Over residues 2084–2115 (QQQQQQQQQQQQQQKQQSNNSNNINNNNNNNN) the composition is skewed to low complexity. Disordered regions lie at residues 2084-2123 (QQQQ…QKSK) and 2329-2350 (NNNN…NNNN).

Belongs to the Integrator subunit 1 family. As to quaternary structure, component of the Integrator complex. The core complex associates with protein phosphatase 2A subunits to form the Integrator-PP2A (INTAC) complex.

It is found in the nucleus. In terms of biological role, component of the integrator complex, a multiprotein complex that terminates RNA polymerase II (Pol II) transcription in the promoter-proximal region of genes. The integrator complex provides a quality checkpoint during transcription elongation by driving premature transcription termination of transcripts that are unfavorably configured for transcriptional elongation: the complex terminates transcription by (1) catalyzing dephosphorylation of the C-terminal domain (CTD) of Pol II subunit polr2a, (2) degrading the exiting nascent RNA transcript via endonuclease activity and (3) promoting the release of Pol II from bound DNA. The integrator complex is also involved in terminating the synthesis of non-coding Pol II transcripts, such as enhancer RNAs (eRNAs), small nuclear RNAs (snRNAs), telomerase RNAs and long non-coding RNAs (lncRNAs). The polypeptide is Integrator complex subunit 1 homolog (ints1) (Dictyostelium discoideum (Social amoeba)).